We begin with the raw amino-acid sequence, 543 residues long: Glucose-6-phosphate isomerase (543 aa).

The Proton donor role is filled by Glu-353. Active-site residues include His-384 and Lys-504.

The protein belongs to the GPI family.

Its subcellular location is the cytoplasm. It catalyses the reaction alpha-D-glucose 6-phosphate = beta-D-fructose 6-phosphate. It functions in the pathway carbohydrate biosynthesis; gluconeogenesis. It participates in carbohydrate degradation; glycolysis; D-glyceraldehyde 3-phosphate and glycerone phosphate from D-glucose: step 2/4. Its function is as follows. Catalyzes the reversible isomerization of glucose-6-phosphate to fructose-6-phosphate. This is Glucose-6-phosphate isomerase from Roseiflexus castenholzii (strain DSM 13941 / HLO8).